The sequence spans 311 residues: Malate dehydrogenase (311 aa).

Residues 10–15 (GAGRVG) and aspartate 35 each bind NAD(+). Residues arginine 84 and arginine 90 each contribute to the substrate site. Residues asparagine 97 and 120-122 (VTN) each bind NAD(+). Asparagine 122 and arginine 153 together coordinate substrate. Histidine 177 acts as the Proton acceptor in catalysis.

Belongs to the LDH/MDH superfamily. MDH type 3 family.

It catalyses the reaction (S)-malate + NAD(+) = oxaloacetate + NADH + H(+). In terms of biological role, catalyzes the reversible oxidation of malate to oxaloacetate. This chain is Malate dehydrogenase, found in Nitrosococcus oceani (strain ATCC 19707 / BCRC 17464 / JCM 30415 / NCIMB 11848 / C-107).